The primary structure comprises 523 residues: Light-independent protochlorophyllide reductase subunit B (523 aa).

Residue Asp-36 participates in [4Fe-4S] cluster binding. The Proton donor role is filled by Asp-290. 425–426 provides a ligand contact to substrate; sequence GL.

It belongs to the ChlB/BchB/BchZ family. As to quaternary structure, protochlorophyllide reductase is composed of three subunits; ChlL, ChlN and ChlB. Forms a heterotetramer of two ChlB and two ChlN subunits. Requires [4Fe-4S] cluster as cofactor.

The enzyme catalyses chlorophyllide a + oxidized 2[4Fe-4S]-[ferredoxin] + 2 ADP + 2 phosphate = protochlorophyllide a + reduced 2[4Fe-4S]-[ferredoxin] + 2 ATP + 2 H2O. Its pathway is porphyrin-containing compound metabolism; chlorophyll biosynthesis (light-independent). Its function is as follows. Component of the dark-operative protochlorophyllide reductase (DPOR) that uses Mg-ATP and reduced ferredoxin to reduce ring D of protochlorophyllide (Pchlide) to form chlorophyllide a (Chlide). This reaction is light-independent. The NB-protein (ChlN-ChlB) is the catalytic component of the complex. In Prochlorococcus marinus (strain MIT 9301), this protein is Light-independent protochlorophyllide reductase subunit B.